The following is a 443-amino-acid chain: ATP-dependent protease ATPase subunit HslU (443 aa).

ATP-binding positions include I18, 60 to 65 (GVGKTE), D256, E321, and R393.

It belongs to the ClpX chaperone family. HslU subfamily. A double ring-shaped homohexamer of HslV is capped on each side by a ring-shaped HslU homohexamer. The assembly of the HslU/HslV complex is dependent on binding of ATP.

The protein resides in the cytoplasm. Functionally, ATPase subunit of a proteasome-like degradation complex; this subunit has chaperone activity. The binding of ATP and its subsequent hydrolysis by HslU are essential for unfolding of protein substrates subsequently hydrolyzed by HslV. HslU recognizes the N-terminal part of its protein substrates and unfolds these before they are guided to HslV for hydrolysis. The polypeptide is ATP-dependent protease ATPase subunit HslU (Nitrosospira multiformis (strain ATCC 25196 / NCIMB 11849 / C 71)).